The chain runs to 267 residues: tRNA pseudouridine synthase A (267 aa).

Catalysis depends on Asp-53, which acts as the Nucleophile. Substrate is bound at residue Tyr-111.

Belongs to the tRNA pseudouridine synthase TruA family. In terms of assembly, homodimer.

It carries out the reaction uridine(38/39/40) in tRNA = pseudouridine(38/39/40) in tRNA. In terms of biological role, formation of pseudouridine at positions 38, 39 and 40 in the anticodon stem and loop of transfer RNAs. This Alcanivorax borkumensis (strain ATCC 700651 / DSM 11573 / NCIMB 13689 / SK2) protein is tRNA pseudouridine synthase A.